A 181-amino-acid chain; its full sequence is Large ribosomal subunit protein uL5 (181 aa).

This sequence belongs to the universal ribosomal protein uL5 family. In terms of assembly, part of the 50S ribosomal subunit; contacts the 5S rRNA and probably tRNA. Forms a bridge to the 30S subunit in the 70S ribosome.

In terms of biological role, this is one of the proteins that bind and probably mediate the attachment of the 5S RNA into the large ribosomal subunit, where it forms part of the central protuberance. In the 70S ribosome it contacts protein S13 of the 30S subunit (bridge B1b), connecting the 2 subunits; this bridge is implicated in subunit movement. May contact the P site tRNA; the 5S rRNA and some of its associated proteins might help stabilize positioning of ribosome-bound tRNAs. The sequence is that of Large ribosomal subunit protein uL5 from Methanococcus vannielii.